A 513-amino-acid chain; its full sequence is Butyrophilin subfamily 3 member A1 (513 aa).

The signal sequence occupies residues 1–29; it reads MKMASFLAFLLLNFRVCLLLLQLLMPHSA. Ig-like V-type domains are found at residues 30-139 and 145-236; these read QFSV…KALV and ALGS…ASIS. Topologically, residues 30–254 are extracellular; sequence QFSVLGPSGP…AQRWIAALAG (225 aa). 2 disulfide bridges follow: cysteine 52/cysteine 126 and cysteine 166/cysteine 220. Asparagine 115 is a glycosylation site (N-linked (GlcNAc...) asparagine). The chain crosses the membrane as a helical span at residues 255-271; it reads TLPVLLLLLGGAGYFLW. The Cytoplasmic portion of the chain corresponds to 272–513; it reads QQQEEKKTQF…EPTALTICPA (242 aa). Positions 322 to 513 constitute a B30.2/SPRY domain; that stretch reads RGERHSAYNE…EPTALTICPA (192 aa).

Belongs to the immunoglobulin superfamily. BTN/MOG family. Homodimer. N-glycosylated. Detected on T-cells, natural killer cells, dendritic cells and macrophages (at protein level). Ubiquitous. Highly expressed in heart, pancreas and lung, Moderately expressed in placenta, liver and muscle.

Its subcellular location is the cell membrane. Its function is as follows. Plays a role in T-cell activation and in the adaptive immune response. Regulates the proliferation of activated T-cells. Regulates the release of cytokines and IFNG by activated T-cells. Mediates the response of T-cells toward infected and transformed cells that are characterized by high levels of phosphorylated metabolites, such as isopentenyl pyrophosphate. This Homo sapiens (Human) protein is Butyrophilin subfamily 3 member A1 (BTN3A1).